A 209-amino-acid chain; its full sequence is Protein-L-isoaspartate O-methyltransferase (209 aa).

Ser59 is a catalytic residue.

The protein belongs to the methyltransferase superfamily. L-isoaspartyl/D-aspartyl protein methyltransferase family.

It is found in the cytoplasm. It carries out the reaction [protein]-L-isoaspartate + S-adenosyl-L-methionine = [protein]-L-isoaspartate alpha-methyl ester + S-adenosyl-L-homocysteine. Catalyzes the methyl esterification of L-isoaspartyl residues in peptides and proteins that result from spontaneous decomposition of normal L-aspartyl and L-asparaginyl residues. It plays a role in the repair and/or degradation of damaged proteins. This chain is Protein-L-isoaspartate O-methyltransferase, found in Helicobacter pylori (strain P12).